A 569-amino-acid chain; its full sequence is Methionine--tRNA ligase (569 aa).

Positions 11 to 21 (PYINGIKHLGN) match the 'HIGH' region motif. Cysteine 143, cysteine 146, cysteine 156, and cysteine 159 together coordinate Zn(2+). The short motif at 342 to 346 (KFSTS) is the 'KMSKS' region element. ATP is bound at residue threonine 345.

It belongs to the class-I aminoacyl-tRNA synthetase family. MetG type 1 subfamily. As to quaternary structure, monomer. It depends on Zn(2+) as a cofactor.

The protein localises to the cytoplasm. The enzyme catalyses tRNA(Met) + L-methionine + ATP = L-methionyl-tRNA(Met) + AMP + diphosphate. Is required not only for elongation of protein synthesis but also for the initiation of all mRNA translation through initiator tRNA(fMet) aminoacylation. The protein is Methionine--tRNA ligase of Caulobacter vibrioides (strain ATCC 19089 / CIP 103742 / CB 15) (Caulobacter crescentus).